Consider the following 232-residue polypeptide: Orotate phosphoribosyltransferase (232 aa).

Residues Arg107, Lys108, Lys111, and 133 to 141 (EDLTTDGGS) contribute to the 5-phospho-alpha-D-ribose 1-diphosphate site. Thr137 is an orotate binding site.

It belongs to the purine/pyrimidine phosphoribosyltransferase family. PyrE subfamily. In terms of assembly, homodimer. The cofactor is Mg(2+).

It catalyses the reaction orotidine 5'-phosphate + diphosphate = orotate + 5-phospho-alpha-D-ribose 1-diphosphate. It functions in the pathway pyrimidine metabolism; UMP biosynthesis via de novo pathway; UMP from orotate: step 1/2. Functionally, catalyzes the transfer of a ribosyl phosphate group from 5-phosphoribose 1-diphosphate to orotate, leading to the formation of orotidine monophosphate (OMP). The polypeptide is Orotate phosphoribosyltransferase (Cereibacter sphaeroides (strain ATCC 17029 / ATH 2.4.9) (Rhodobacter sphaeroides)).